The chain runs to 316 residues: Methionyl-tRNA formyltransferase (316 aa).

112–115 provides a ligand contact to (6S)-5,6,7,8-tetrahydrofolate; sequence GLLP.

It belongs to the Fmt family.

It carries out the reaction L-methionyl-tRNA(fMet) + (6R)-10-formyltetrahydrofolate = N-formyl-L-methionyl-tRNA(fMet) + (6S)-5,6,7,8-tetrahydrofolate + H(+). Its function is as follows. Attaches a formyl group to the free amino group of methionyl-tRNA(fMet). The formyl group appears to play a dual role in the initiator identity of N-formylmethionyl-tRNA by promoting its recognition by IF2 and preventing the misappropriation of this tRNA by the elongation apparatus. The protein is Methionyl-tRNA formyltransferase of Chlamydia muridarum (strain MoPn / Nigg).